A 147-amino-acid chain; its full sequence is Protein LOL1 (147 aa).

The segment at 1-38 (MVASRAPRSESPWLKKPMHGVSGSTAMASTPWSSMPPS) is disordered. Polar residues predominate over residues 22 to 38 (SGSTAMASTPWSSMPPS). A putative zinc finger region spans residues 47-77 (QLVCSGCRNLLMYPAGATSICCAVCGTVTAV).

Its subcellular location is the nucleus. Putative zinc finger that may be involved in programmed cell death and defense response. In Oryza sativa subsp. japonica (Rice), this protein is Protein LOL1 (LOL1).